The primary structure comprises 510 residues: GMP synthase [glutamine-hydrolyzing] (510 aa).

The Glutamine amidotransferase type-1 domain maps to 5–195 (LVLVVDFGGQ…LFNVCNLKGD (191 aa)). Cys82 functions as the Nucleophile in the catalytic mechanism. Active-site residues include His169 and Glu171. A GMPS ATP-PPase domain is found at 196 to 385 (WSMSSFAEQQ…LGIPHKLVWR (190 aa)). An ATP-binding site is contributed by 223–229 (SGGVDSS).

As to quaternary structure, homodimer.

The catalysed reaction is XMP + L-glutamine + ATP + H2O = GMP + L-glutamate + AMP + diphosphate + 2 H(+). The protein operates within purine metabolism; GMP biosynthesis; GMP from XMP (L-Gln route): step 1/1. Functionally, catalyzes the synthesis of GMP from XMP. This Clostridium botulinum (strain ATCC 19397 / Type A) protein is GMP synthase [glutamine-hydrolyzing].